Here is a 135-residue protein sequence, read N- to C-terminus: Photosystem II extrinsic protein U (135 aa).

The N-terminal stretch at 1–26 (MKNLVRLLAVIALIIGSFWGKVPAQA) is a signal peptide.

The protein belongs to the PsbU family. As to quaternary structure, PSII is composed of 1 copy each of membrane proteins PsbA, PsbB, PsbC, PsbD, PsbE, PsbF, PsbH, PsbI, PsbJ, PsbK, PsbL, PsbM, PsbT, PsbX, PsbY, PsbZ, Psb30/Ycf12, peripheral proteins PsbO, CyanoQ (PsbQ), PsbU, PsbV and a large number of cofactors. It forms dimeric complexes.

Its subcellular location is the cellular thylakoid membrane. One of the extrinsic, lumenal subunits of photosystem II (PSII). PSII is a light-driven water plastoquinone oxidoreductase, using light energy to abstract electrons from H(2)O, generating a proton gradient subsequently used for ATP formation. The extrinsic proteins stabilize the structure of photosystem II oxygen-evolving complex (OEC), the ion environment of oxygen evolution and protect the OEC against heat-induced inactivation. The chain is Photosystem II extrinsic protein U from Microcystis aeruginosa (strain NIES-843 / IAM M-2473).